Consider the following 901-residue polypeptide: Protein translocase subunit SecA (901 aa).

Residues glutamine 87, glycine 105 to threonine 109, and aspartate 512 each bind ATP. A disordered region spans residues alanine 852–serine 901. Zn(2+)-binding residues include cysteine 885, cysteine 887, cysteine 896, and histidine 897. Residues lysine 891–serine 901 are compositionally biased toward basic residues.

Belongs to the SecA family. Monomer and homodimer. Part of the essential Sec protein translocation apparatus which comprises SecA, SecYEG and auxiliary proteins SecDF-YajC and YidC. It depends on Zn(2+) as a cofactor.

The protein resides in the cell inner membrane. It localises to the cytoplasm. It catalyses the reaction ATP + H2O + cellular proteinSide 1 = ADP + phosphate + cellular proteinSide 2.. In terms of biological role, part of the Sec protein translocase complex. Interacts with the SecYEG preprotein conducting channel. Has a central role in coupling the hydrolysis of ATP to the transfer of proteins into and across the cell membrane, serving both as a receptor for the preprotein-SecB complex and as an ATP-driven molecular motor driving the stepwise translocation of polypeptide chains across the membrane. The sequence is that of Protein translocase subunit SecA from Klebsiella pneumoniae subsp. pneumoniae (strain ATCC 700721 / MGH 78578).